The following is a 520-amino-acid chain: Peptide chain release factor 3 (520 aa).

Residues 8–277 (ESRKTFAIIS…FAPMPNARQT (270 aa)) form the tr-type G domain. Residues 17–24 (SHPDAGKT), 85–89 (DTPGH), and 139–142 (NKLD) contribute to the GTP site.

This sequence belongs to the TRAFAC class translation factor GTPase superfamily. Classic translation factor GTPase family. PrfC subfamily.

The protein localises to the cytoplasm. Its function is as follows. Increases the formation of ribosomal termination complexes and stimulates activities of RF-1 and RF-2. It binds guanine nucleotides and has strong preference for UGA stop codons. It may interact directly with the ribosome. The stimulation of RF-1 and RF-2 is significantly reduced by GTP and GDP, but not by GMP. This Staphylococcus aureus (strain USA300 / TCH1516) protein is Peptide chain release factor 3.